Consider the following 318-residue polypeptide: N-succinylornithine carbamoyltransferase (318 aa).

Carbamoyl phosphate contacts are provided by residues 47–50 (SLRT), W75, and R110. E142 serves as a coordination point for N(2)-succinyl-L-ornithine. 147–150 (HPLQ) contacts carbamoyl phosphate. N(2)-succinyl-L-ornithine is bound by residues H176 and K236. A carbamoyl phosphate-binding site is contributed by 274–275 (CL). R278 provides a ligand contact to N(2)-succinyl-L-ornithine. R302 contacts carbamoyl phosphate.

This sequence belongs to the aspartate/ornithine carbamoyltransferase superfamily. SOTCase family. In terms of assembly, homotrimer.

It catalyses the reaction N(2)-succinyl-L-ornithine + carbamoyl phosphate = N(2)-succinyl-L-citrulline + phosphate + H(+). Its pathway is amino-acid biosynthesis; L-arginine biosynthesis. Functionally, catalyzes the transfer of the carbamoyl group from carbamoyl phosphate to the delta-amino group of N(2)-succinyl-L-ornithine to produce N(2)-succinyl-L-citrulline. Is essential for arginine biosynthesis. Has no activity with either L-ornithine or L-aspartate as substrate. Also has no detectable AOTCase activity, being unable to convert N(2)-acetyl-L-ornithine to N(2)-acetyl-L-citrulline. The sequence is that of N-succinylornithine carbamoyltransferase from Bacteroides thetaiotaomicron (strain ATCC 29148 / DSM 2079 / JCM 5827 / CCUG 10774 / NCTC 10582 / VPI-5482 / E50).